The sequence spans 168 residues: CASP-like protein 4D1 (168 aa).

The Cytoplasmic portion of the chain corresponds to 1-11 (MAPPPPSLASR). Residues 12 to 32 (MAALILRILTFIFLIASLVIL) traverse the membrane as a helical segment. Topologically, residues 33-57 (TTNTATLELDLVEVKVHFKDVYAYR) are extracellular. Residues 58-78 (YMLATIVIGLAYTVLQIAFTL) traverse the membrane as a helical segment. Residues 79–97 (YYVATGNRMMSGDGNLAFD) lie on the Cytoplasmic side of the membrane. The chain crosses the membrane as a helical span at residues 98 to 118 (FFGDKVISYILVTGAAAGFAS). At 119 to 144 (TKDIKPVFSGSGDFDAFINKGYASAS) the chain is on the extracellular side. The helical transmembrane segment at 145–165 (LLLIGFVCTAVLSVFSSYALP) threads the bilayer. Topologically, residues 166-168 (KQV) are cytoplasmic.

Belongs to the Casparian strip membrane proteins (CASP) family. In terms of assembly, homodimer and heterodimers.

It localises to the cell membrane. This is CASP-like protein 4D1 from Ricinus communis (Castor bean).